Here is a 291-residue protein sequence, read N- to C-terminus: Taste receptor type 2 member 16 (291 aa).

M1 is a topological domain (extracellular). The helical transmembrane segment at 2–22 (IPIQLTVFFMIIYVLESLTII) threads the bilayer. Residues 23–41 (VQSSLIVAVLGREWLQVRR) are Cytoplasmic-facing. The chain crosses the membrane as a helical span at residues 42–62 (LMPVDMILISLGISRFCLQWA). Residues 63 to 84 (SMLNNFCSYFNLNYVLCNLTIT) lie on the Extracellular side of the membrane. Residue N80 is glycosylated (N-linked (GlcNAc...) asparagine). Residues 85–105 (WEFFNILTFWLNSLLTVFYCI) traverse the membrane as a helical segment. Residues 106–125 (KASSFTHHIFLWLRWRILRL) lie on the Cytoplasmic side of the membrane. A helical membrane pass occupies residues 126-146 (FPWILLGSLMITCVTIIPSAI). At 147–182 (GNYIQIQLLTMEHLPRNSTVTDKLEKFHQYQFQAHT) the chain is on the extracellular side. Residue N163 is glycosylated (N-linked (GlcNAc...) asparagine). A helical membrane pass occupies residues 183–203 (VALVIPFILFLASTILLMASL). Topologically, residues 204-228 (TKQIQHHSTGHCNPSMKAHFTALRS) are cytoplasmic. The helical transmembrane segment at 229–249 (LAVLFIVFTSYFLTILITIIG) threads the bilayer. The Extracellular portion of the chain corresponds to 250–257 (TLFDKRCW). Residues 258–278 (LWVWEAFVYAFILMHSTSLML) traverse the membrane as a helical segment. The Cytoplasmic portion of the chain corresponds to 279-291 (SSPTLKRILKGKC).

The protein belongs to the G-protein coupled receptor T2R family. Interacts with RTP3 and RTP4.

The protein resides in the cell membrane. Functionally, receptor that may play a role in the perception of bitterness and is gustducin-linked. May play a role in sensing the chemical composition of the gastrointestinal content. The activity of this receptor may stimulate alpha gustducin, mediate PLC-beta-2 activation and lead to the gating of TRPM5. This Pan paniscus (Pygmy chimpanzee) protein is Taste receptor type 2 member 16 (TAS2R16).